Consider the following 78-residue polypeptide: Large ribosomal subunit protein bL28 (78 aa).

It belongs to the bacterial ribosomal protein bL28 family.

This Glaesserella parasuis serovar 5 (strain SH0165) (Haemophilus parasuis) protein is Large ribosomal subunit protein bL28.